Reading from the N-terminus, the 160-residue chain is Putative tRNA (cytidine(34)-2'-O)-methyltransferase (160 aa).

Residues Ile82, Gly107, Leu128, and Ser136 each coordinate S-adenosyl-L-methionine.

This sequence belongs to the class IV-like SAM-binding methyltransferase superfamily. RNA methyltransferase TrmH family. TrmL subfamily.

The protein localises to the cytoplasm. The enzyme catalyses cytidine(34) in tRNA + S-adenosyl-L-methionine = 2'-O-methylcytidine(34) in tRNA + S-adenosyl-L-homocysteine + H(+). It carries out the reaction 5-carboxymethylaminomethyluridine(34) in tRNA(Leu) + S-adenosyl-L-methionine = 5-carboxymethylaminomethyl-2'-O-methyluridine(34) in tRNA(Leu) + S-adenosyl-L-homocysteine + H(+). Functionally, could methylate the ribose at the nucleotide 34 wobble position in tRNA. This chain is Putative tRNA (cytidine(34)-2'-O)-methyltransferase (cspR), found in Bacillus subtilis (strain 168).